The primary structure comprises 317 residues: Putative HTH-type transcriptional regulatory protein TGAM_1316 (317 aa).

The region spanning 131–189 (LKKLREKHGYSVGELASLLGVSRKSLLNYERNEQAVSLEVALRMEELFDEPIAEPIDVL) is the HTH cro/C1-type domain. Positions 142 to 161 (VGELASLLGVSRKSLLNYER) form a DNA-binding region, H-T-H motif.

This is Putative HTH-type transcriptional regulatory protein TGAM_1316 from Thermococcus gammatolerans (strain DSM 15229 / JCM 11827 / EJ3).